Reading from the N-terminus, the 347-residue chain is Ribosomal RNA large subunit methyltransferase M (347 aa).

Residues Ser-184, 217–220, Asp-236, Asp-256, and Asp-272 contribute to the S-adenosyl-L-methionine site; that span reads APGG. Catalysis depends on Lys-301, which acts as the Proton acceptor.

It belongs to the class I-like SAM-binding methyltransferase superfamily. RNA methyltransferase RlmE family. RlmM subfamily. In terms of assembly, monomer.

The protein resides in the cytoplasm. The enzyme catalyses cytidine(2498) in 23S rRNA + S-adenosyl-L-methionine = 2'-O-methylcytidine(2498) in 23S rRNA + S-adenosyl-L-homocysteine + H(+). Its function is as follows. Catalyzes the 2'-O-methylation at nucleotide C2498 in 23S rRNA. This chain is Ribosomal RNA large subunit methyltransferase M, found in Xanthomonas oryzae pv. oryzae (strain PXO99A).